Consider the following 252-residue polypeptide: 3-dehydroquinate dehydratase (252 aa).

Residues S21, 46–48, and R82 contribute to the 3-dehydroquinate site; that span reads EWR. The Proton donor/acceptor role is filled by H143. K170 (schiff-base intermediate with substrate) is an active-site residue. Residues R213, S232, and Q236 each coordinate 3-dehydroquinate.

Belongs to the type-I 3-dehydroquinase family. Homodimer.

The enzyme catalyses 3-dehydroquinate = 3-dehydroshikimate + H2O. It functions in the pathway metabolic intermediate biosynthesis; chorismate biosynthesis; chorismate from D-erythrose 4-phosphate and phosphoenolpyruvate: step 3/7. In terms of biological role, involved in the third step of the chorismate pathway, which leads to the biosynthesis of aromatic amino acids. Catalyzes the cis-dehydration of 3-dehydroquinate (DHQ) and introduces the first double bond of the aromatic ring to yield 3-dehydroshikimate. The sequence is that of 3-dehydroquinate dehydratase from Shigella dysenteriae serotype 1 (strain Sd197).